The chain runs to 184 residues: MQASQPETWHGTTILTVRKGGKVVIGGDGQVSIGQTVIKSNAKKVRKLGKGDVIGGFAGATADAFTLFERLESKLEQYPGQLTRAAVELAKDWRTDRYLRRLEAMMLVADKDVSLVLTGTGDVLEPESGVMAIGSGGNYALAAARALIDSDKDAETIVRSALDIAADICVYTNRNLTIEALAAS.

The active site involves Thr-12. Ala-166, Cys-169, and Thr-172 together coordinate Na(+).

This sequence belongs to the peptidase T1B family. HslV subfamily. A double ring-shaped homohexamer of HslV is capped on each side by a ring-shaped HslU homohexamer. The assembly of the HslU/HslV complex is dependent on binding of ATP.

The protein localises to the cytoplasm. It catalyses the reaction ATP-dependent cleavage of peptide bonds with broad specificity.. With respect to regulation, allosterically activated by HslU binding. In terms of biological role, protease subunit of a proteasome-like degradation complex believed to be a general protein degrading machinery. The chain is ATP-dependent protease subunit HslV from Nitrobacter winogradskyi (strain ATCC 25391 / DSM 10237 / CIP 104748 / NCIMB 11846 / Nb-255).